The chain runs to 174 residues: Calcium-binding protein F (174 aa).

EF-hand domains follow at residues 9–44 (KIFQ…KMDG), 60–83 (VDMD…EAKK), 92–127 (AALA…NGHT), and 133–162 (DQVL…RRID). Aspartate 22, asparagine 24, aspartate 26, serine 28, and aspartate 33 together coordinate Ca(2+). 10 residues coordinate Ca(2+): aspartate 105, aspartate 107, aspartate 109, lysine 111, glutamate 116, aspartate 140, aspartate 142, aspartate 144, cysteine 146, and glutamate 151.

The polypeptide is Calcium-binding protein F (cbpF) (Dictyostelium discoideum (Social amoeba)).